We begin with the raw amino-acid sequence, 316 residues long: Annexin A13 (316 aa).

Gly2 carries the N-myristoyl glycine lipid modification. Annexin repeat units follow at residues 14–85, 86–157, 169–241, and 245–316; these read FDVD…ALLD, RPSE…SLLQ, DLAG…TLVR, and DCED…ALLH.

This sequence belongs to the annexin family. In terms of assembly, monomer and homodimer. Detected in epithelial cells in colon and jejunum (at protein level). Detected in epithelial cells in jejunum.

The protein localises to the apical cell membrane. The protein resides in the cell membrane. It localises to the cytoplasmic vesicle. Functionally, binds to membranes enriched in phosphatidylserine or phosphatidylglycerol in a calcium-dependent manner. Half-maximal membrane binding requires about 60 uM calcium. Does not bind to membranes that lack phospholipids with an acidic headgroup. In terms of biological role, binds to membranes enriched in phosphatidylserine or phosphatidylglycerol in a calcium-dependent manner, but requires higher calcium levels for membrane binding than isoform A. Half-maximal membrane binding requires about 320 uM calcium. The polypeptide is Annexin A13 (ANXA13) (Homo sapiens (Human)).